The primary structure comprises 528 residues: MSQTSLKKERDPSILILDFGSQYSELIARRIRETNVFSLVVSNCISIKEINNINPKGIILSGGPNSVYEQNAPKCDEKIFNLGIPILGICYGMQLMVKELGGSVIPATKKAEYGRAPINIDQESDLLSDVQDKSIMWMSHGDSIKCLPVGFNKIAHTENTLHAAISNDLKKLFGVQFHPEVIHSEYGMTVIKNFVYKISCCAADWTTETYIEETIPRIREQVGNKKVLLALSGGVDSSTLAFLLNKAIGNQLTCMFIDQGFMRKGEPEFLMNFFDKKFHIKVEYINARKRFISKLKGITEPEQKRKIIGEEFIRVFEEESNRLGPFQYLAQGTLYPDVIESAGTNIDPKTGERIAVKIKSHHNVGGLPKDLQFKLVEPLRKLFKDEVRQVGAALGLPAEIIKRHPFPGPGLAIRILGEVNNEKLDCLRDADWIVRDEIKKAGLYNEIWQAFAVLLPVKTVGVMGDKRTYAWPIVLRCVSSEDGMTADWSKIPFKILERIANRIVNEVISVNRVVYDITSKPPGTIEWE.

The 192-residue stretch at 13–204 folds into the Glutamine amidotransferase type-1 domain; that stretch reads SILILDFGSQ…VYKISCCAAD (192 aa). Cys-90 functions as the Nucleophile in the catalytic mechanism. Catalysis depends on residues His-178 and Glu-180. The region spanning 205 to 403 is the GMPS ATP-PPase domain; that stretch reads WTTETYIEET…LGLPAEIIKR (199 aa). 232 to 238 serves as a coordination point for ATP; the sequence is SGGVDSS.

Homodimer.

It carries out the reaction XMP + L-glutamine + ATP + H2O = GMP + L-glutamate + AMP + diphosphate + 2 H(+). The protein operates within purine metabolism; GMP biosynthesis; GMP from XMP (L-Gln route): step 1/1. In terms of biological role, catalyzes the synthesis of GMP from XMP. The polypeptide is GMP synthase [glutamine-hydrolyzing] (Prochlorococcus marinus (strain MIT 9215)).